A 124-amino-acid polypeptide reads, in one-letter code: Large ribosomal subunit protein bL12 (124 aa).

The protein belongs to the bacterial ribosomal protein bL12 family. Homodimer. Part of the ribosomal stalk of the 50S ribosomal subunit. Forms a multimeric L10(L12)X complex, where L10 forms an elongated spine to which 2 to 4 L12 dimers bind in a sequential fashion. Binds GTP-bound translation factors.

Its function is as follows. Forms part of the ribosomal stalk which helps the ribosome interact with GTP-bound translation factors. Is thus essential for accurate translation. This chain is Large ribosomal subunit protein bL12, found in Azobacteroides pseudotrichonymphae genomovar. CFP2.